The chain runs to 339 residues: Protein FAM131B (339 aa).

The segment at 1-22 (MDSTSSLHGSSLHRPSTEQTRT) is disordered. A phosphoserine mark is found at serine 47, serine 114, and serine 117. The tract at residues 222–339 (GPAFGDSQPS…PLLTQPSTPA (118 aa)) is disordered. Polar residues-rich tracts occupy residues 239 to 250 (QPASGYSAQEPS) and 324 to 339 (PTTS…STPA). Threonine 325 is modified (phosphothreonine). Position 327 is a phosphoserine (serine 327).

This sequence belongs to the FAM131 family.

This Bos taurus (Bovine) protein is Protein FAM131B (FAM131B).